The sequence spans 227 residues: ATP synthase F(0) complex subunit a (227 aa).

The next 6 helical transmembrane spans lie at 12 to 32 (PYLMGMPLILPSLLLPTLLFP), 69 to 89 (WALLLTSLILLLLSINLMGLL), 98 to 118 (QLSMNMALAFPLWLATLLIGL), 139 to 159 (IPILIMIETTSLLIRPLALGV), 170 to 190 (LLIQLISTATIALLPTMPSIS), and 196 to 216 (ILLLLTILEVAVAMIQAYVFV).

The protein belongs to the ATPase A chain family. Component of the ATP synthase complex composed at least of ATP5F1A/subunit alpha, ATP5F1B/subunit beta, ATP5MC1/subunit c (homooctomer), MT-ATP6/subunit a, MT-ATP8/subunit 8, ATP5ME/subunit e, ATP5MF/subunit f, ATP5MG/subunit g, ATP5MK/subunit k, ATP5MJ/subunit j, ATP5F1C/subunit gamma, ATP5F1D/subunit delta, ATP5F1E/subunit epsilon, ATP5PF/subunit F6, ATP5PB/subunit b, ATP5PD/subunit d, ATP5PO/subunit OSCP. ATP synthase complex consists of a soluble F(1) head domain (subunits alpha(3) and beta(3)) - the catalytic core - and a membrane F(0) domain - the membrane proton channel (subunits c, a, 8, e, f, g, k and j). These two domains are linked by a central stalk (subunits gamma, delta, and epsilon) rotating inside the F1 region and a stationary peripheral stalk (subunits F6, b, d, and OSCP). Interacts with DNAJC30; interaction is direct.

It is found in the mitochondrion inner membrane. The catalysed reaction is H(+)(in) = H(+)(out). Subunit a, of the mitochondrial membrane ATP synthase complex (F(1)F(0) ATP synthase or Complex V) that produces ATP from ADP in the presence of a proton gradient across the membrane which is generated by electron transport complexes of the respiratory chain. ATP synthase complex consist of a soluble F(1) head domain - the catalytic core - and a membrane F(1) domain - the membrane proton channel. These two domains are linked by a central stalk rotating inside the F(1) region and a stationary peripheral stalk. During catalysis, ATP synthesis in the catalytic domain of F(1) is coupled via a rotary mechanism of the central stalk subunits to proton translocation. With the subunit c (ATP5MC1), forms the proton-conducting channel in the F(0) domain, that contains two crucial half-channels (inlet and outlet) that facilitate proton movement from the mitochondrial intermembrane space (IMS) into the matrix. Protons are taken up via the inlet half-channel and released through the outlet half-channel, following a Grotthuss mechanism. This is ATP synthase F(0) complex subunit a from Coturnix japonica (Japanese quail).